The following is a 719-amino-acid chain: Aminodeoxychorismate synthase (719 aa).

Positions 5 to 199 (RTLLIDNYDS…RDLSLRAAGH (195 aa)) constitute a Glutamine amidotransferase type-1 domain. Catalysis depends on Cys86, which acts as the Nucleophile. Residues His173 and Glu175 contribute to the active site. Residues 199–224 (HRPPHTERIPAPAPAPAPAPAPAPPA) form a disordered region. Over residues 209–224 (APAPAPAPAPAPAPPA) the composition is skewed to pro residues.

In the C-terminal section; belongs to the anthranilate synthase component I family.

It carries out the reaction chorismate + L-glutamine = 4-amino-4-deoxychorismate + L-glutamate. It functions in the pathway antibiotic biosynthesis. Functionally, involved in pristinamycin I biosynthesis. Catalyzes the biosynthesis of 4-amino-4-deoxychorismate (ADC) from chorismate and glutamine. This Streptomyces pristinaespiralis protein is Aminodeoxychorismate synthase.